The primary structure comprises 129 residues: Small ribosomal subunit protein uS8 (129 aa).

Belongs to the universal ribosomal protein uS8 family. As to quaternary structure, part of the 30S ribosomal subunit. Contacts proteins S5 and S12.

One of the primary rRNA binding proteins, it binds directly to 16S rRNA central domain where it helps coordinate assembly of the platform of the 30S subunit. This chain is Small ribosomal subunit protein uS8, found in Dichelobacter nodosus (strain VCS1703A).